Reading from the N-terminus, the 256-residue chain is Type III pantothenate kinase (256 aa).

Residue 7–14 (DIGNTNVV) participates in ATP binding. 108–111 (GADC) is a substrate binding site. The Proton acceptor role is filled by D110. D130 lines the K(+) pocket. T133 contacts ATP. Residue T185 participates in substrate binding.

Belongs to the type III pantothenate kinase family. Homodimer. Requires NH4(+) as cofactor. K(+) is required as a cofactor.

The protein localises to the cytoplasm. The catalysed reaction is (R)-pantothenate + ATP = (R)-4'-phosphopantothenate + ADP + H(+). It participates in cofactor biosynthesis; coenzyme A biosynthesis; CoA from (R)-pantothenate: step 1/5. Functionally, catalyzes the phosphorylation of pantothenate (Pan), the first step in CoA biosynthesis. In Bifidobacterium adolescentis (strain ATCC 15703 / DSM 20083 / NCTC 11814 / E194a), this protein is Type III pantothenate kinase.